A 42-amino-acid polypeptide reads, in one-letter code: MRDIKTYLSVAPVLATLWFGSLAGLLIEINRLFPDALAFPFF.

Residues 7 to 27 form a helical membrane-spanning segment; it reads YLSVAPVLATLWFGSLAGLLI.

This sequence belongs to the PsaJ family.

It is found in the plastid. The protein resides in the chloroplast thylakoid membrane. In terms of biological role, may help in the organization of the PsaE and PsaF subunits. The sequence is that of Photosystem I reaction center subunit IX from Chloranthus spicatus (Chulantree).